We begin with the raw amino-acid sequence, 328 residues long: Ribosomal RNA small subunit methyltransferase H (328 aa).

S-adenosyl-L-methionine is bound by residues 37 to 39 (GGH), D57, F83, D104, and Q111.

Belongs to the methyltransferase superfamily. RsmH family.

It is found in the cytoplasm. It catalyses the reaction cytidine(1402) in 16S rRNA + S-adenosyl-L-methionine = N(4)-methylcytidine(1402) in 16S rRNA + S-adenosyl-L-homocysteine + H(+). In terms of biological role, specifically methylates the N4 position of cytidine in position 1402 (C1402) of 16S rRNA. The sequence is that of Ribosomal RNA small subunit methyltransferase H from Neisseria meningitidis serogroup C / serotype 2a (strain ATCC 700532 / DSM 15464 / FAM18).